Consider the following 388-residue polypeptide: Carbamoyl phosphate synthase small chain (388 aa).

Residues M1 to G192 are CPSase. The L-glutamine site is built by S51, G244, and G246. In terms of domain architecture, Glutamine amidotransferase type-1 spans T196–A382. C272 serves as the catalytic Nucleophile. Residues M273, Q276, N312, and F315 each coordinate L-glutamine. Active-site residues include H355 and E357.

This sequence belongs to the CarA family. As to quaternary structure, composed of two chains; the small (or glutamine) chain promotes the hydrolysis of glutamine to ammonia, which is used by the large (or ammonia) chain to synthesize carbamoyl phosphate. Tetramer of heterodimers (alpha,beta)4.

The catalysed reaction is hydrogencarbonate + L-glutamine + 2 ATP + H2O = carbamoyl phosphate + L-glutamate + 2 ADP + phosphate + 2 H(+). The enzyme catalyses L-glutamine + H2O = L-glutamate + NH4(+). It participates in amino-acid biosynthesis; L-arginine biosynthesis; carbamoyl phosphate from bicarbonate: step 1/1. It functions in the pathway pyrimidine metabolism; UMP biosynthesis via de novo pathway; (S)-dihydroorotate from bicarbonate: step 1/3. Functionally, small subunit of the glutamine-dependent carbamoyl phosphate synthetase (CPSase). CPSase catalyzes the formation of carbamoyl phosphate from the ammonia moiety of glutamine, carbonate, and phosphate donated by ATP, constituting the first step of 2 biosynthetic pathways, one leading to arginine and/or urea and the other to pyrimidine nucleotides. The small subunit (glutamine amidotransferase) binds and cleaves glutamine to supply the large subunit with the substrate ammonia. The protein is Carbamoyl phosphate synthase small chain of Nostoc sp. (strain PCC 7120 / SAG 25.82 / UTEX 2576).